The chain runs to 159 residues: Transmembrane protein 42 (159 aa).

A run of 4 helical transmembrane segments spans residues 37-57, 59-79, 100-120, and 124-144; these read FWGV…AASA, LAFG…VMAS, IASV…GYVL, and CQEV…TLIH.

The protein localises to the membrane. This is Transmembrane protein 42 (TMEM42) from Pongo abelii (Sumatran orangutan).